Consider the following 355-residue polypeptide: Guanine nucleotide-binding protein G(z) subunit alpha (355 aa).

The segment covering 1–14 (MGCRQSSEEKEAAR) has biased composition (basic and acidic residues). Residues 1–26 (MGCRQSSEEKEAARRSRRIDRHLRSE) form a disordered region. G2 is lipidated: N-myristoyl glycine. C3 is lipidated: S-palmitoyl cysteine. One can recognise a G-alpha domain in the interval 32–355 (REIKLLLLGT…QNNLKYIGLC (324 aa)). The tract at residues 35 to 48 (KLLLLGTSNSGKST) is G1 motif. GTP-binding positions include 40-47 (GTSNSGKS), 176-182 (LRSRDMT), 201-205 (DVGGQ), 270-273 (NKKD), and A327. Mg(2+)-binding residues include S47 and T182. A G2 motif region spans residues 174-182 (DILRSRDMT). The segment at 197-206 (FKMVDVGGQR) is G3 motif. The segment at 266–273 (ILFLNKKD) is G4 motif. Positions 325-330 (TCATDT) are G5 motif.

The protein belongs to the G-alpha family. G(i/o/t/z) subfamily. G-proteins are composed of 3 units; alpha, beta and gamma. The alpha chain contains the guanine nucleotide binding site. Interacts with ADGRB2.

It localises to the membrane. Guanine nucleotide-binding proteins (G proteins) are involved as modulators or transducers in various transmembrane signaling systems. This chain is Guanine nucleotide-binding protein G(z) subunit alpha (Gnaz), found in Rattus norvegicus (Rat).